A 255-amino-acid chain; its full sequence is Isoprenyl transferase (255 aa).

Asp-35 is an active-site residue. Asp-35 is a binding site for Mg(2+). Residues Gly-36–Arg-39, Trp-40, Arg-48, His-52, and Ser-80–Glu-82 each bind substrate. The Proton acceptor role is filled by Asn-83. Substrate-binding positions include Trp-84, Arg-86, Arg-203, and Arg-209–Ser-211. Glu-222 is a binding site for Mg(2+).

Belongs to the UPP synthase family. As to quaternary structure, homodimer. The cofactor is Mg(2+).

Functionally, catalyzes the condensation of isopentenyl diphosphate (IPP) with allylic pyrophosphates generating different type of terpenoids. This Clostridium tetani (strain Massachusetts / E88) protein is Isoprenyl transferase.